The chain runs to 499 residues: Endoglucanase (499 aa).

Residues 1-29 form the signal peptide; it reads MKRSISIFITCLLITLLTMGGMLASPASA. Residues histidine 65, 69-70, tyrosine 96, and histidine 131 contribute to the substrate site; that span reads WY. Catalysis depends on glutamate 169, which acts as the Proton donor. A substrate-binding site is contributed by tyrosine 231. Glutamate 257 (nucleophile) is an active-site residue. Substrate is bound by residues 263 to 264, tryptophan 291, and 296 to 298; these read AS and KQE. A CBM3 domain is found at 350-499; it reads QENGISVQYR…GKLIWGTEPN (150 aa).

The protein belongs to the glycosyl hydrolase 5 (cellulase A) family.

The catalysed reaction is Endohydrolysis of (1-&gt;4)-beta-D-glucosidic linkages in cellulose, lichenin and cereal beta-D-glucans.. In Bacillus subtilis, this protein is Endoglucanase (bglC).